The primary structure comprises 393 residues: Mitogen-activated protein kinase SIPK (393 aa).

Residues 1 to 11 (MDGSGQQTDTM) show a composition bias toward polar residues. Positions 1-31 (MDGSGQQTDTMMSDAGAEQPPPAPQPVAGMD) are disordered. One can recognise a Protein kinase domain in the interval 60–345 (KPPILPIGKG…VEGALAHPYL (286 aa)). ATP contacts are provided by residues 66-74 (IGKGAYGIV) and lysine 89. Aspartate 186 serves as the catalytic Proton acceptor. Positions 218–220 (TEY) match the TXY motif.

This sequence belongs to the protein kinase superfamily. CMGC Ser/Thr protein kinase family. MAP kinase subfamily. As to quaternary structure, interacts with SIPKK.

It carries out the reaction L-tyrosyl-[protein] + ATP = O-phospho-L-tyrosyl-[protein] + ADP + H(+). The catalysed reaction is L-seryl-[protein] + ATP = O-phospho-L-seryl-[protein] + ADP + H(+). It catalyses the reaction L-threonyl-[protein] + ATP = O-phospho-L-threonyl-[protein] + ADP + H(+). Activated by threonine and tyrosine phosphorylation. Its function is as follows. Phosphorylates myelin basic protein (MBP) in vitro. May be involved in disease resistance. This chain is Mitogen-activated protein kinase SIPK, found in Nicotiana tabacum (Common tobacco).